Here is a 384-residue protein sequence, read N- to C-terminus: Actin-related protein 2/3 complex subunit 1 (384 aa).

WD repeat units follow at residues 61–99 (DHDK…TYKP), 105–146 (RINR…WVSK), 151–190 (PIKS…LDSK), 212–251 (YQGS…QSVN), and 349–383 (AHEN…VIYT).

This sequence belongs to the WD repeat ARPC1 family. As to quaternary structure, component of the Arp2/3 complex composed of ARP2, ARP3, ARC40/p41-ARC, ARC35/p34-ARC, ARC18/p21-ARC, ARC19/p20-ARC and ARC16/p16-ARC.

Its subcellular location is the cytoplasm. The protein resides in the cytoskeleton. It is found in the actin patch. Its function is as follows. Functions as a component of the Arp2/3 complex which is involved in regulation of actin polymerization and together with an activating nucleation-promoting factor (NPF) mediates the formation of branched actin networks. The polypeptide is Actin-related protein 2/3 complex subunit 1 (ARC40) (Saccharomyces cerevisiae (strain ATCC 204508 / S288c) (Baker's yeast)).